Here is a 624-residue protein sequence, read N- to C-terminus: MALWGGRFTQAADTRFKDFNDSLRFDYRLAEQDIVGSIAWSKALLSVNVLSKEEQQKLEFALNELKLEVMEDPHQILHSDAEDIHSWVEQQLIGKVGDLGKKLHTGRSRNDQVATDLKLWCRQQGHQLLLGLDKLQTQMVNVAKQHQATVLPGYTHLQRAQPVTFAHWCLAYVEMFERDYSRLSDALTRLDTCPLGSGALAGTAYPIDREQLAQDLGFRRATRNSLDSVSDRDHVMELMSVASISMLHLSRLAEDMIFYNSGESGFIELADTVTSGSSLMPQKKNPDALELIRGKTGRVYGSLAGMMMTVKALPLAYNKDMQEDKEGLFDALDTWNDCMEMAALCFDGIKVNGERTLEAAKQGYANSTELADYLVAKGIPFREAHHIVGVAVVGAIAQGCALEELSLEQLQSFSPVIEADVYQILTIESCLEKRSALGGVSPKQVAYAVEQADKRLAARDTTLVKVRPARITDIETLESMVAYWANLGENLPRTRSEIIRDIGLFAVSEHQGLVTGCASLYIYDSGLAEIRSLGIEAGWQRQGQGTAVVQYLIDKAKDMAIKKLFVLTRAPEFFLKQNFVQTSKSLLPEKVLKDCDQCPRQHACDEVALEFNLSEQIISQVKVA.

The argininosuccinate lyase stretch occupies residues 1–466 (MALWGGRFTQ…AARDTTLVKV (466 aa)). Residues 464–614 (VKVRPARITD…DEVALEFNLS (151 aa)) form the N-acetyltransferase domain. The probable acetyltransferase stretch occupies residues 467 to 624 (RPARITDIET…EQIISQVKVA (158 aa)).

The protein in the N-terminal section; belongs to the lyase 1 family. Argininosuccinate lyase subfamily.

The protein localises to the cytoplasm. It carries out the reaction 2-(N(omega)-L-arginino)succinate = fumarate + L-arginine. It participates in amino-acid biosynthesis; L-arginine biosynthesis; L-arginine from L-ornithine and carbamoyl phosphate: step 3/3. This chain is Bifunctional protein ArgH (argH), found in Vibrio vulnificus (strain CMCP6).